The sequence spans 450 residues: UDP-N-acetylmuramoylalanine--D-glutamate ligase (450 aa).

119–125 (GSNGKTT) contacts ATP.

This sequence belongs to the MurCDEF family.

Its subcellular location is the cytoplasm. The enzyme catalyses UDP-N-acetyl-alpha-D-muramoyl-L-alanine + D-glutamate + ATP = UDP-N-acetyl-alpha-D-muramoyl-L-alanyl-D-glutamate + ADP + phosphate + H(+). The protein operates within cell wall biogenesis; peptidoglycan biosynthesis. Its function is as follows. Cell wall formation. Catalyzes the addition of glutamate to the nucleotide precursor UDP-N-acetylmuramoyl-L-alanine (UMA). This Bacillus anthracis (strain A0248) protein is UDP-N-acetylmuramoylalanine--D-glutamate ligase.